Consider the following 130-residue polypeptide: Ribonuclease P protein component 2 (130 aa).

Belongs to the eukaryotic/archaeal RNase P protein component 2 family. In terms of assembly, consists of a catalytic RNA component and at least 4-5 protein subunits.

The protein localises to the cytoplasm. It carries out the reaction Endonucleolytic cleavage of RNA, removing 5'-extranucleotides from tRNA precursor.. Functionally, part of ribonuclease P, a protein complex that generates mature tRNA molecules by cleaving their 5'-ends. This is Ribonuclease P protein component 2 from Methanococcus vannielii (strain ATCC 35089 / DSM 1224 / JCM 13029 / OCM 148 / SB).